A 318-amino-acid polypeptide reads, in one-letter code: Thymidylate synthase (318 aa).

DUMP contacts are provided by residues Arg25 and 180 to 181 (RR). Cys200 functions as the Nucleophile in the catalytic mechanism. DUMP contacts are provided by residues 220–223 (RSGD), Asn231, and 261–263 (HIY). Asp223 contacts (6R)-5,10-methylene-5,6,7,8-tetrahydrofolate. A (6R)-5,10-methylene-5,6,7,8-tetrahydrofolate-binding site is contributed by Ala317.

It belongs to the thymidylate synthase family. Bacterial-type ThyA subfamily. In terms of assembly, homodimer.

It localises to the cytoplasm. The catalysed reaction is dUMP + (6R)-5,10-methylene-5,6,7,8-tetrahydrofolate = 7,8-dihydrofolate + dTMP. It participates in pyrimidine metabolism; dTTP biosynthesis. Its function is as follows. Catalyzes the reductive methylation of 2'-deoxyuridine-5'-monophosphate (dUMP) to 2'-deoxythymidine-5'-monophosphate (dTMP) while utilizing 5,10-methylenetetrahydrofolate (mTHF) as the methyl donor and reductant in the reaction, yielding dihydrofolate (DHF) as a by-product. This enzymatic reaction provides an intracellular de novo source of dTMP, an essential precursor for DNA biosynthesis. The protein is Thymidylate synthase of Lactobacillus delbrueckii subsp. bulgaricus (strain ATCC BAA-365 / Lb-18).